The sequence spans 118 residues: Autophagy-related protein 8D (118 aa).

G118 carries Phosphatidylethanolamine amidated glycine lipidation.

This sequence belongs to the ATG8 family. In terms of assembly, interacts with ATG4. The C-terminal Gly is amidated with phosphatidylethanolamine by an activating system similar to that for ubiquitin.

It is found in the cytoplasmic vesicle. Its subcellular location is the autophagosome membrane. It localises to the vacuole membrane. The protein resides in the cytoplasm. The protein localises to the cytoskeleton. In terms of biological role, ubiquitin-like modifier involved in autophagosomes formation. May mediate the delivery of the autophagosomes to the vacuole via the microtubule cytoskeleton. The sequence is that of Autophagy-related protein 8D (ATG8D) from Oryza sativa subsp. japonica (Rice).